The chain runs to 290 residues: MKRIMLFLVTNLAVMLVLGVVLNILFSVLGINKSSISGLLMFCAVFGFGGSFISLLMSKWMAKRSYGVQVIEQPRNETEHWLVSTVARQAREAGIKMPEVGIYDSPEMNAFATGARRDDSLVAVSSGLLYSMSRDEAEAVLAHEVSHVANGDMVTLTLIQGVVNTFVMFFARIVAGVISNFFSSNNDEESSSSGGFAYMITVFVLEMAFGVLASMIVMWFSRQREFRADAGAAKLAGRDKMIAALQRLSRGAEPQMEGSMMAFGINGKRSMSELFMSHPPIEQRIAALRG.

Transmembrane regions (helical) follow at residues Leu6 to Phe26 and Ile36 to Leu56. His143 contributes to the Zn(2+) binding site. Residue Glu144 is part of the active site. His147 contacts Zn(2+). A run of 2 helical transmembrane segments spans residues Leu158 to Ile178 and Ile200 to Phe220. Position 225 (Glu225) interacts with Zn(2+).

It belongs to the peptidase M48B family. It depends on Zn(2+) as a cofactor.

The protein resides in the cell inner membrane. The protein is Protease HtpX of Aeromonas salmonicida (strain A449).